The primary structure comprises 385 residues: NADH-quinone oxidoreductase subunit H (385 aa).

8 helical membrane-spanning segments follow: residues 14 to 34 (GLKL…LVWL), 80 to 100 (FLYY…FSAI), 130 to 150 (IGVG…TLLM), 172 to 192 (ISYE…YGTF), 219 to 239 (LPNW…SAAF), 280 to 300 (MMIA…IPYV), 325 to 345 (LIHF…FIWV), and 365 to 385 (MLPW…IASL).

This sequence belongs to the complex I subunit 1 family. In terms of assembly, NDH-1 is composed of 14 different subunits. Subunits NuoA, H, J, K, L, M, N constitute the membrane sector of the complex.

The protein resides in the cell inner membrane. It catalyses the reaction a quinone + NADH + 5 H(+)(in) = a quinol + NAD(+) + 4 H(+)(out). NDH-1 shuttles electrons from NADH, via FMN and iron-sulfur (Fe-S) centers, to quinones in the respiratory chain. The immediate electron acceptor for the enzyme in this species is believed to be ubiquinone. Couples the redox reaction to proton translocation (for every two electrons transferred, four hydrogen ions are translocated across the cytoplasmic membrane), and thus conserves the redox energy in a proton gradient. This subunit may bind ubiquinone. The sequence is that of NADH-quinone oxidoreductase subunit H from Bdellovibrio bacteriovorus (strain ATCC 15356 / DSM 50701 / NCIMB 9529 / HD100).